The sequence spans 98 residues: uncharacterized protein (98 aa).

This is an uncharacterized protein from Frog virus 3 (isolate Goorha) (FV-3).